The sequence spans 1021 residues: Nonribosomal peptide synthetase asaC (1021 aa).

The adenylation (A) domain stretch occupies residues 17-418 (RHHVRTSPNA…ARADNMVKIR (402 aa)). One can recognise a Carrier domain in the interval 528–603 (KDAGDSVTWL…GLASVIDAGH (76 aa)). S563 bears the O-(pantetheine 4'-phosphoryl)serine mark. Positions 646–888 (LTGATGFLGT…MIPVDFITTA (243 aa)) are short-chain dehydrogenase/reductase (R) domain.

This sequence belongs to the NRP synthetase family.

It functions in the pathway secondary metabolite biosynthesis. In terms of biological role, nonribosomal peptide synthetase; part of the gene cluster that mediates the biosynthesis of aspergillic acid, a hydroxamic acid-containing pyrazinone with aliphatic side chains that originates from leucine (Leu) and isoleucine (Ile). Aspergillic acid has antibiotic properties and was shown to be lethal to mice. The first step in the pathway is the production of deoxyaspergillic acid via a condensation between the Ile amine and the Leu carboxylic acid, followed by a reductive release from the protein forming the dipeptide aldehyde NH(2)-Leu-Ile-CHO, which could undergo an intermolecular cyclization resulting in a dihydropyrazinone. As the NRPS asaC lacks a condensation domain, it is improbable that it is responsible for condensation of Leu and Ile. One possibility is that asaC acts on a previously condensed dipeptide and functions as a Leu-Ile reductase to yield deoxyaspergillic acid. After asaC forms deoxyaspergillic acid, the cytochrome P450 asaD oxidizes the pyrazinone to the hydroxamic acid-containing bioactive metabolite aspergillic acid. The hydroxylase/desaturase asaB can then convert aspergillic acid to hydroxyaspergillic acid. Both aspergillic acid and hydroxyaspergillic acid can form complexes with iron producing ferriaspergillin analogs. The sequence is that of Nonribosomal peptide synthetase asaC from Aspergillus flavus (strain ATCC 200026 / FGSC A1120 / IAM 13836 / NRRL 3357 / JCM 12722 / SRRC 167).